The primary structure comprises 727 residues: MLRIPVRKALVVLSKSPKGCVRTTATAASNLIEVFVDGQSVMVEPGTTVLQACEKVGMQIPRFCYHERLSVAGNCRMCLVEIEKAPKVVAACAMPVMKGWNILTNSKKSKKAREGVMEFLLANHPLDCPICDQGGECDLQDQSMMFGNDRSRFLEGKRAVEDKNIGPLVKTIMTRCIQCTRCIRFASEIAGVDDLGTTGRGNDMQVGTYIEKMFMSELSGNIIDICPVGALTSKPYAFTARPWETRKTESIDVMDAVGSNIVVSTRTGEVMRILPRMHEDINEEWISDKTRFAYDGLKRQRLTEPMVRNEKGLLTYTSWEDALSRVAGMLQTFQGKDVAAIAGGLVDAEALVALKDLLNRVDSDTLCTEEVFPTAGAGTDLRSNYLLNTTIAGVEEADVVLLVGTNPRFEAPLFNARLRKSWLHNDLKVALIGSPVDLTYTYDHLGDSPKILQDIASGSHPFSQVLKEAKKPMVVLGSSALQRNDGAAILAAVSSIAQKIRMTSGVTGDWKVMNILHRIASQVAALDLGYKPGVEAIRKNPPKVLFLLGADGGCITRQDLPKDCFIIYQGHHGDVGAPIADVILPGAAYTEKSATYVNTEGRAQQTKVAVTPPGLAREDWKIIRALSEIAGMTLPYDTLDQVRNRLEEVSPNLVRYDDIEGANYFQQANELSKLVNQQLLADPLVPPQLTIKDFYMTDSISRASQTMAKCVKAVTEGAQAVEEPSIC.

Residues 1–23 constitute a mitochondrion transit peptide; that stretch reads MLRIPVRKALVVLSKSPKGCVRT. The region spanning 30–108 is the 2Fe-2S ferredoxin-type domain; it reads NLIEVFVDGQ…GWNILTNSKK (79 aa). Positions 64, 75, and 78 each coordinate [2Fe-2S] cluster. An N6-acetyllysine modification is found at lysine 84. Residue cysteine 92 participates in [2Fe-2S] cluster binding. The 4Fe-4S His(Cys)3-ligated-type domain occupies 108–147; sequence KSKKAREGVMEFLLANHPLDCPICDQGGECDLQDQSMMFG. Residues histidine 124, cysteine 128, cysteine 131, cysteine 137, cysteine 176, cysteine 179, cysteine 182, and cysteine 226 each contribute to the [4Fe-4S] cluster site. In terms of domain architecture, 4Fe-4S Mo/W bis-MGD-type spans 245–301; sequence TRKTESIDVMDAVGSNIVVSTRTGEVMRILPRMHEDINEEWISDKTRFAYDGLKRQR. Lysine 467, lysine 499, and lysine 709 each carry N6-acetyllysine.

This sequence belongs to the complex I 75 kDa subunit family. As to quaternary structure, core subunit of respiratory chain NADH dehydrogenase (Complex I) which is composed of 45 different subunits. This is the largest subunit of complex I and it is a component of the iron-sulfur (IP) fragment of the enzyme. Complex I associates with ubiquinol-cytochrome reductase complex (Complex III) to form supercomplexes. Interacts with MDM2 and AKAP1. It depends on [2Fe-2S] cluster as a cofactor. [4Fe-4S] cluster is required as a cofactor.

Its subcellular location is the mitochondrion inner membrane. The catalysed reaction is a ubiquinone + NADH + 5 H(+)(in) = a ubiquinol + NAD(+) + 4 H(+)(out). Functionally, core subunit of the mitochondrial membrane respiratory chain NADH dehydrogenase (Complex I) which catalyzes electron transfer from NADH through the respiratory chain, using ubiquinone as an electron acceptor. Essential for catalysing the entry and efficient transfer of electrons within complex I. Plays a key role in the assembly and stability of complex I and participates in the association of complex I with ubiquinol-cytochrome reductase complex (Complex III) to form supercomplexes. The protein is NADH-ubiquinone oxidoreductase 75 kDa subunit, mitochondrial (NDUFS1) of Pan troglodytes (Chimpanzee).